A 326-amino-acid polypeptide reads, in one-letter code: Protoheme IX farnesyltransferase (326 aa).

The next 8 membrane-spanning stretches (helical) occupy residues Leu35 to Leu55, Leu60 to Leu80, Thr106 to Val126, Leu129 to Leu149, Ile157 to Gly177, Trp185 to Leu205, Val238 to Met258, and Trp289 to Ala309.

The protein belongs to the UbiA prenyltransferase family. Protoheme IX farnesyltransferase subfamily.

Its subcellular location is the cell inner membrane. It carries out the reaction heme b + (2E,6E)-farnesyl diphosphate + H2O = Fe(II)-heme o + diphosphate. The protein operates within porphyrin-containing compound metabolism; heme O biosynthesis; heme O from protoheme: step 1/1. Its function is as follows. Converts heme B (protoheme IX) to heme O by substitution of the vinyl group on carbon 2 of heme B porphyrin ring with a hydroxyethyl farnesyl side group. In Synechococcus sp. (strain CC9902), this protein is Protoheme IX farnesyltransferase.